The chain runs to 721 residues: DNA ligase (721 aa).

Residues 42 to 46 (DAEYD), 91 to 92 (SL), and Glu-125 contribute to the NAD(+) site. Lys-127 serves as the catalytic N6-AMP-lysine intermediate. NAD(+) is bound by residues Arg-148, Glu-184, Lys-300, and Lys-324. Residues Cys-430, Cys-433, Cys-448, and Cys-454 each coordinate Zn(2+). Positions 642 to 721 (STGSPVEGKT…DAWFTLVGEE (80 aa)) constitute a BRCT domain.

The protein belongs to the NAD-dependent DNA ligase family. LigA subfamily. Requires Mg(2+) as cofactor. Mn(2+) is required as a cofactor.

The catalysed reaction is NAD(+) + (deoxyribonucleotide)n-3'-hydroxyl + 5'-phospho-(deoxyribonucleotide)m = (deoxyribonucleotide)n+m + AMP + beta-nicotinamide D-nucleotide.. Its function is as follows. DNA ligase that catalyzes the formation of phosphodiester linkages between 5'-phosphoryl and 3'-hydroxyl groups in double-stranded DNA using NAD as a coenzyme and as the energy source for the reaction. It is essential for DNA replication and repair of damaged DNA. The chain is DNA ligase from Brucella anthropi (strain ATCC 49188 / DSM 6882 / CCUG 24695 / JCM 21032 / LMG 3331 / NBRC 15819 / NCTC 12168 / Alc 37) (Ochrobactrum anthropi).